Consider the following 206-residue polypeptide: Bis(5'-adenosyl)-triphosphatase (206 aa).

Residues 3–115 enclose the HIT domain; sequence KPIYFSKFLV…KINNVGDLIY (113 aa). The Histidine triad motif motif lies at 96–100; the sequence is HLHTH. The active-site Tele-AMP-histidine intermediate is the histidine 98. The segment at 143–164 is disordered; it reads RQARKNNSTSATVDGDELSQGP.

As to quaternary structure, homodimer. Requires Mn(2+) as cofactor.

It is found in the cytoplasm. The protein resides in the nucleus. It localises to the mitochondrion. The enzyme catalyses P(1),P(3)-bis(5'-adenosyl) triphosphate + H2O = AMP + ADP + 2 H(+). Functionally, cleaves A-5'-PPP-5'A to yield AMP and ADP. Can cleave all dinucleoside polyphosphates, provided the phosphate chain contains at least 3 phosphates and that 1 of the 2 bases composing the nucleotide is a purine. Is most effective on dinucleoside triphosphates. Negatively regulates intracellular dinucleoside polyphosphate levels, which elevate following heat shock. The polypeptide is Bis(5'-adenosyl)-triphosphatase (HNT2) (Saccharomyces cerevisiae (strain RM11-1a) (Baker's yeast)).